A 150-amino-acid chain; its full sequence is Guanine nucleotide-binding protein subunit gamma 2 (150 aa).

A compositionally biased stretch (acidic residues) spans 1–11 (MRGEANGEEEQ). The disordered stretch occupies residues 1 to 59 (MRGEANGEEEQQPPRRNHLRDDAEEEEEVERRAARPVSGQQQQQQRRRPTDVGGGAAMR). A coiled-coil region spans residues 65-97 (GKHRLSAAIARLDQELQSLQDELNELETMEPAS). In terms of domain architecture, G protein gamma spans 71-137 (AAIARLDQEL…RWFQRVRSSR (67 aa)).

In terms of assembly, g proteins are composed of 3 units, alpha, beta and gamma. Interacts with the beta subunit RGB1.

The protein localises to the cell membrane. Guanine nucleotide-binding proteins (G proteins) are involved as modulators or transducers in various transmembrane signaling systems. In Oryza sativa subsp. indica (Rice), this protein is Guanine nucleotide-binding protein subunit gamma 2.